A 147-amino-acid chain; its full sequence is Hemoglobin subunit beta (147 aa).

Valine 2 is modified (N-acetylvaline). In terms of domain architecture, Globin spans 3–147; it reads HLTGEEKSAV…VANALAHKYH (145 aa). Threonine 13 carries the post-translational modification Phosphothreonine. At serine 45 the chain carries Phosphoserine. Residue lysine 60 is modified to N6-acetyllysine. Histidine 64 is a binding site for heme b. At lysine 83 the chain carries N6-acetyllysine. Heme b is bound at residue histidine 93. An S-nitrosocysteine modification is found at cysteine 94. N6-acetyllysine is present on lysine 145.

It belongs to the globin family. Heterotetramer of two alpha chains and two beta chains. In terms of tissue distribution, red blood cells.

Its function is as follows. Involved in oxygen transport from the lung to the various peripheral tissues. This is Hemoglobin subunit beta (HBB) from Callithrix jacchus (White-tufted-ear marmoset).